Reading from the N-terminus, the 198-residue chain is Nucleoside triphosphate pyrophosphatase 1 (198 aa).

Aspartate 75 acts as the Proton acceptor in catalysis.

Belongs to the Maf family. The cofactor is a divalent metal cation.

The protein localises to the cytoplasm. The enzyme catalyses a ribonucleoside 5'-triphosphate + H2O = a ribonucleoside 5'-phosphate + diphosphate + H(+). It carries out the reaction a 2'-deoxyribonucleoside 5'-triphosphate + H2O = a 2'-deoxyribonucleoside 5'-phosphate + diphosphate + H(+). Its function is as follows. Nucleoside triphosphate pyrophosphatase. May have a dual role in cell division arrest and in preventing the incorporation of modified nucleotides into cellular nucleic acids. This chain is Nucleoside triphosphate pyrophosphatase 1, found in Jannaschia sp. (strain CCS1).